The sequence spans 95 residues: DNA-directed RNA polymerase subunit Rpo6 (95 aa).

The protein belongs to the archaeal Rpo6/eukaryotic RPB6 RNA polymerase subunit family. In terms of assembly, part of the RNA polymerase complex.

It localises to the cytoplasm. The catalysed reaction is RNA(n) + a ribonucleoside 5'-triphosphate = RNA(n+1) + diphosphate. DNA-dependent RNA polymerase (RNAP) catalyzes the transcription of DNA into RNA using the four ribonucleoside triphosphates as substrates. In Saccharolobus islandicus (strain M.16.27) (Sulfolobus islandicus), this protein is DNA-directed RNA polymerase subunit Rpo6.